The primary structure comprises 967 residues: E3 ubiquitin-protein ligase arkadia-C (967 aa).

Disordered stretches follow at residues 57 to 175 (QQID…VSSL) and 193 to 276 (RKRF…SGGM). Residues 112–131 (SSFSDCISSPSSSSHFGDSD) show a composition bias toward low complexity. The segment covering 149–160 (GINSTPRTQSAR) has biased composition (polar residues). Residues 232–251 (SSSSSSENDLSSESSSSSST) are compositionally biased toward low complexity. The SUMO interaction motif 1 (SIM) signature appears at 280–284 (VVVIE). The SUMO interaction motif 2 (SIM) signature appears at 305 to 311 (EVEIVTV). A disordered region spans residues 321 to 343 (LGHPRSHWGQNSQSGRTQEHRTR). Positions 360–364 (VVDLT) match the SUMO interaction motif 3 (SIM) motif. Disordered stretches follow at residues 368–452 (DDPT…MPRL), 482–548 (HSHH…LSNN), 629–657 (LHHQ…MDYV), and 669–689 (PSLT…LSTA). Residues 385 to 395 (VSTVSSNTSTS) are compositionally biased toward low complexity. The span at 482-498 (HSHHFPHHHHHHHHHSS) shows a compositional bias: basic residues. Positions 629 to 642 (LHHQTSACPHSNPA) are enriched in polar residues. The segment covering 643–654 (SQPPPPPPPPPM) has biased composition (pro residues). The interval 880–882 (YPH) is ubiquitin binding. Residues C915 and C918 each coordinate Zn(2+). Residues 915 to 956 (CTICLSILEEGEDVRRLPCMHLFHQVCVDQWLITNKKCPICR) form an RING-type; atypical zinc finger. The ubiquitin binding stretch occupies residues 930–934 (RLPCM). Residues H938 and C941 each contribute to the Zn(2+) site.

This sequence belongs to the Arkadia family. Monomer.

Its subcellular location is the nucleus. It is found in the cytoplasm. It localises to the PML body. The enzyme catalyses S-ubiquitinyl-[E2 ubiquitin-conjugating enzyme]-L-cysteine + [acceptor protein]-L-lysine = [E2 ubiquitin-conjugating enzyme]-L-cysteine + N(6)-ubiquitinyl-[acceptor protein]-L-lysine.. It functions in the pathway protein modification; protein ubiquitination. Its activity is regulated as follows. Binds free ubiquitin non-covalently via its RING-type zinc finger. Ubiquitin-binding leads to enhance the E3 ubiquitin-protein ligase activity by stabilizing the ubiquitin-conjugating enzyme E2 (donor ubiquitin) in the 'closed' conformation and activating ubiquitin transfer. Its function is as follows. E3 ubiquitin-protein ligase required for mesoderm patterning during embryonic development. Acts as an enhancer of the transcriptional responses of the smad2/smad3 effectors, which are activated downstream of BMP. Acts by mediating ubiquitination and degradation of SMAD inhibitors such as smad7, inducing their proteasomal degradation and thereby enhancing the transcriptional activity of TGF-beta and BMP. Specifically binds polysumoylated chains via SUMO interaction motifs (SIMs) and mediates ubiquitination of sumoylated substrates. The regulation of the BMP-SMAD signaling is however independent of sumoylation and is not dependent of SUMO interaction motifs (SIMs). This Xenopus laevis (African clawed frog) protein is E3 ubiquitin-protein ligase arkadia-C (rnf111-c).